The sequence spans 1047 residues: Suppression of tumorigenicity 18 protein (1047 aa).

Disordered regions lie at residues 41-92, 168-221, and 251-286; these read TAED…HSTA, FLIH…VPKY, and DSETERKDPQNALAEPLDGNAQPSFPDVEEEDSESL. Residues 52–65 are compositionally biased toward basic residues; the sequence is NKRKSLLMKPRHYS. Residues 171–181 show a composition bias toward basic and acidic residues; the sequence is HSDDGRDKIDD. 2 CCHHC-type zinc fingers span residues 359 to 402 and 403 to 446; these read PRPE…PLEI and LAMH…KLAM. Residues Cys368, Cys373, His386, Cys392, Cys412, Cys417, His430, and Cys436 each contribute to the Zn(2+) site. Disordered regions lie at residues 523–563 and 672–710; these read GRKT…SYSY and YSKTHGKTEEEKEKDPVSSLENLEEKKFPGEASIPSPKP. A compositionally biased stretch (polar residues) spans 550–563; the sequence is AHTQSPGRASSYSY. Residues 677–687 are compositionally biased toward basic and acidic residues; the sequence is GKTEEEKEKDP. CCHHC-type zinc fingers lie at residues 715 to 758, 759 to 802, 807 to 850, and 860 to 903; these read RDLK…LKSL, MAAN…GVKM, EEKE…QKEN, and KLNK…IKKG. Zn(2+) is bound by residues Cys724, Cys729, His742, Cys748, Cys768, Cys773, His786, Cys792, Cys816, Cys821, His834, Cys840, Cys869, Cys874, His887, and Cys893. A coiled-coil region spans residues 920–992; that stretch reads IESDEEIRHL…AGLSQALISS (73 aa).

The protein belongs to the MYT1 family. As to expression, detected at low levels in heart, liver, kidney, skeletal muscle, pancreas, testis, ovary and prostate. Detected at even lower levels in mammary epithelial cells and breast cancer cells.

The protein localises to the nucleus. Functionally, repressor that binds to DNA sequences containing a bipartite element consisting of a direct repeat of the sequence 5'-AAAGTTT-3' separated by 2-9 nucleotides. Represses basal transcription activity from target promoters. Inhibits colony formation in cultured breast cancer cells. This Homo sapiens (Human) protein is Suppression of tumorigenicity 18 protein (ST18).